We begin with the raw amino-acid sequence, 481 residues long: MSTARTENPVLMGMSSQNGQLRGPLKPSAGPGGGGTQTQQINQLKNASTINSGSQQQAQSMSSVIKPGDDWKKTLKLPPKDLRIKTSDVTSTKGNEFEDYCLKRELLMGIFEMGWEKPSPIQEESIPIALSGRDILARAKNGTGKSGAYLIPLLERLDLKKDCIQAMVIVPTRELALQVSQICIQVSKHMGGVKVMATTGGTNLRDDIMRLDDTVHVVIATPGRILDLIKKGVAKVDHIQMIVLDEADKLLSQDFVQIMEDIIITLPKNRQILLYSATFPLSVQKFMTSHLQKPYEINLMEELTLKGVTQYYAYVTERQKVHCLNTLFSRLQINQSIIFCNSSQRVELLAKKISQLGYSCFYIHAKMRQEHRNRVFHDFRNGLCRNLVCTDLFTRGIDIQAVNVVINFDFPKLAETYLHRIGRSGRFGHLGLAINLITYDDRFNLKSIEEQLGTEIKPIPSSIDKSLYVAEYHSESGEDKP.

Positions 1–72 (MSTARTENPV…SVIKPGDDWK (72 aa)) are disordered. Residues 41–51 (INQLKNASTIN) show a composition bias toward polar residues. Over residues 52–63 (SGSQQQAQSMSS) the composition is skewed to low complexity. A Q motif motif is present at residues 95-123 (NEFEDYCLKRELLMGIFEMGWEKPSPIQE). One can recognise a Helicase ATP-binding domain in the interval 126-297 (IPIALSGRDI…TSHLQKPYEI (172 aa)). Position 139–146 (139–146 (AKNGTGKS)) interacts with ATP. Residues 245 to 248 (DEAD) carry the DEAD box motif. The Helicase C-terminal domain occupies 307-467 (GVTQYYAYVT…PIPSSIDKSL (161 aa)).

This sequence belongs to the DEAD box helicase family. DDX6/DHH1 subfamily. As to quaternary structure, component of a ribonucleoprotein (RNP) complex, composed at least of cpeb1, lsm14b/rap55b, ddx6/Xp54, ybx2/frgy2, pat1/P100, eif4enif1/4E-T and eif4e1b. Component of a ribonucleoprotein (RNP) complex, composed at least of elavl1/elrA and/or elavl2/elrB, igf2bp3/vg1RBP, ddx6/Xp54, ybx2/frgy2, lsm14b/rap55b and, in a subset of RNP complexes, stau1/staufen. Component of a ribonucleoprotein (RNP) complex, composed at least of lsm14a/rap55a, ybx2/frgy2, ddx6/Xp54 and eif4enif1/4E-T. Interacts with lsm14a/rap55a.

The protein localises to the cytoplasm. Its subcellular location is the P-body. It is found in the nucleus. The catalysed reaction is ATP + H2O = ADP + phosphate + H(+). In terms of biological role, ATP-dependent RNA helicase that is an integral component of messenger ribonucleoprotein complexes (mRNPs), storage particles that mask maternal mRNAs from the translational apparatus during oocyte maturation. This chain is Probable ATP-dependent RNA helicase ddx6 (ddx6), found in Xenopus tropicalis (Western clawed frog).